Reading from the N-terminus, the 71-residue chain is Disintegrin tzabcanin (71 aa).

Residues G1–A71 enclose the Disintegrin domain. Disulfide bonds link C4-C19, C6-C14, C13-C36, C27-C33, C32-C57, and C45-C64. The Cell attachment site motif lies at R49–D51.

This sequence belongs to the venom metalloproteinase (M12B) family. P-II subfamily. P-IIa sub-subfamily. Expressed by the venom gland.

Its subcellular location is the secreted. Its function is as follows. Inhibits fibrinogen interaction with platelets. Acts by binding to alpha-IIb/beta-3 (ITGA2B/ITGB3) on the platelet surface and inhibits aggregation induced by ADP, thrombin, platelet-activating factor and collagen. Inhibits cell adhesion to vitronectin, probably by blocking its receptor integrin alpha-V/beta-3 (ITGAV/ITGB3), and to fibronectin in vitro. Shows little to no cytotoxicity in vitro. In Crotalus tzabcan (Yucatan neotropical rattlesnake), this protein is Disintegrin tzabcanin.